A 43-amino-acid polypeptide reads, in one-letter code: Protein PsbN (43 aa).

Residues 7-27 (LSIGIAVVVIAVTGFSIYTAF) traverse the membrane as a helical segment.

Belongs to the PsbN family.

It is found in the cellular thylakoid membrane. In terms of biological role, may play a role in photosystem I and II biogenesis. The chain is Protein PsbN from Picosynechococcus sp. (strain ATCC 27264 / PCC 7002 / PR-6) (Agmenellum quadruplicatum).